Consider the following 60-residue polypeptide: Large ribosomal subunit protein bL33 (60 aa).

The protein belongs to the bacterial ribosomal protein bL33 family.

This chain is Large ribosomal subunit protein bL33, found in Chlorobaculum tepidum (strain ATCC 49652 / DSM 12025 / NBRC 103806 / TLS) (Chlorobium tepidum).